A 415-amino-acid chain; its full sequence is YDG domain-containing protein At5g47160 (415 aa).

Residues 163-186 (KKLSNASRLRANAHRPTQHKDERR) are disordered. In terms of domain architecture, YDG spans 262 to 407 (GSVPGIKVGD…NILFKFKLRR (146 aa)).

It localises to the nucleus. This is YDG domain-containing protein At5g47160 from Arabidopsis thaliana (Mouse-ear cress).